The primary structure comprises 840 residues: Intracellular phospholipase A1 (840 aa).

Disordered stretches follow at residues 1–142 (MSGS…RRRK) and 666–718 (KKNK…AANA). Residues 26–39 (GKVKQKEKPKEKQM) are compositionally biased toward basic and acidic residues. A compositionally biased stretch (low complexity) spans 97–111 (SRPSGLPSNGNPGSS). Residues 564–827 (LEFKVKYLFA…ALFLANVLYC (264 aa)) enclose the DDHD domain. Residues 668–680 (NKDDKTADARSGG) show a composition bias toward basic and acidic residues. The segment covering 681 to 694 (DDENEDEDECDSDE) has biased composition (acidic residues).

The protein belongs to the PA-PLA1 family.

It catalyses the reaction 1,2-dihexadecanoyl-sn-glycero-3-phospho-(1D-myo-inositol) + H2O = 2-hexadecanoyl-sn-glycero-3-phospho-(1D-myo-inositol) + hexadecanoate + H(+). The enzyme catalyses a 1,2-diacyl-sn-glycero-3-phospho-L-serine + H2O = a 2-acyl-sn-glycero-3-phospho-L-serine + a fatty acid + H(+). It carries out the reaction 1-hexadecanoyl-2-(9Z-octadecenoyl)-sn-glycero-3-phospho-L-serine + H2O = 2-(9Z-octadecenoyl)-sn-glycero-3-phospho-L-serine + hexadecanoate + H(+). The catalysed reaction is 1,2-di-(9Z-octadecenoyl)-sn-glycero-3-phosphocholine + H2O = (9Z-octadecenoyl)-sn-glycero-3-phosphocholine + (9Z)-octadecenoate + H(+). It catalyses the reaction a 1,2-diacyl-sn-glycero-3-phosphocholine + H2O = a 1-acyl-sn-glycero-3-phosphocholine + a fatty acid + H(+). The enzyme catalyses 1,2-dihexadecanoyl-sn-glycero-3-phosphocholine + H2O = 1-hexadecanoyl-sn-glycero-3-phosphocholine + hexadecanoate + H(+). Its activity is regulated as follows. Inhibited by E-6-bromomethylene-3-1-naphthalenyl-2H-tetrahydropyran-2-one (BEL) in vitro. Functionally, hydrolyzes the ester bond at the sn-1 position of glycerophospholipids and produces 2-acyl lysophospholipids, being phosphatidylinositol (PI) its major substrate. PI is a versatile lipid that not only serves as a structural component of cellular membranes, but also plays important roles in signal transduction through distinct phosphorylated derivatives of the inositol head group. Catalyzes the hydrolysis of phosphatidylcholine at sn-2 position in vitro. Regulates asymmetric division, an important property of stem cells in C.elegans, by controlling the subcellular localizations of beta-catenin. In Caenorhabditis elegans, this protein is Intracellular phospholipase A1.